A 136-amino-acid chain; its full sequence is Sec-independent protein translocase protein TatB (136 aa).

A helical membrane pass occupies residues 1–21; the sequence is MFDIGFWELVLISVIGLVVLG. The interval 66-136 is disordered; that stretch reads ASKQGLSDLD…TTPPRQDKNE (71 aa). Composition is skewed to basic and acidic residues over residues 77–89 and 96–107; these read ELQKSIDEMKETA and YKKDIDDIKTSL. Residues 108–130 show a composition bias toward polar residues; the sequence is DKNPSGTTQQENSILDSSKTTPP.

It belongs to the TatB family. The Tat system comprises two distinct complexes: a TatABC complex, containing multiple copies of TatA, TatB and TatC subunits, and a separate TatA complex, containing only TatA subunits. Substrates initially bind to the TatABC complex, which probably triggers association of the separate TatA complex to form the active translocon.

The protein localises to the cell inner membrane. Its function is as follows. Part of the twin-arginine translocation (Tat) system that transports large folded proteins containing a characteristic twin-arginine motif in their signal peptide across membranes. Together with TatC, TatB is part of a receptor directly interacting with Tat signal peptides. TatB may form an oligomeric binding site that transiently accommodates folded Tat precursor proteins before their translocation. This Psychromonas ingrahamii (strain DSM 17664 / CCUG 51855 / 37) protein is Sec-independent protein translocase protein TatB.